Here is a 1458-residue protein sequence, read N- to C-terminus: GTPase-activating protein and VPS9 domain-containing protein 1 (1458 aa).

Positions 147 to 385 (SYLLQVLRYL…AAFLDVVIGG (239 aa)) constitute a Ras-GAP domain. Serine 227 bears the Phosphoserine mark. A phosphothreonine mark is found at threonine 390 and threonine 458. Positions 447–475 (AKPGKSSSLDMTPYSTPQMSPATTPANKK) are disordered. The segment covering 451 to 473 (KSSSLDMTPYSTPQMSPATTPAN) has biased composition (polar residues). Tyrosine 460 carries the post-translational modification Phosphotyrosine. A Phosphoserine modification is found at serine 466. Threonine 470 bears the Phosphothreonine mark. A phosphoserine mark is found at serine 566 and serine 569. Disordered stretches follow at residues 574–608 (GISEGPSNRSNSVSSLDLEGESVSELGAGPSGSNG), 738–821 (LESC…PSQS), and 846–867 (HYARPSHPPPDPPILEGAVGGN). Positions 578–588 (GPSNRSNSVSS) are enriched in polar residues. Residues serine 742, serine 746, and serine 757 each carry the phosphoserine modification. The segment covering 758–777 (SRPSTPGLSVVSGISATSED) has biased composition (polar residues). Threonine 762 bears the Phosphothreonine mark. Residue serine 766 is modified to Phosphoserine. Basic and acidic residues predominate over residues 778–789 (IPNKIEDLRSEC). 5 positions are modified to phosphoserine: serine 876, serine 902, serine 903, serine 908, and serine 914. Residues 888-902 (KQRHSYPERLVRSRS) show a composition bias toward basic and acidic residues. Disordered regions lie at residues 888–1022 (KQRH…RLSA) and 1039–1072 (KRTSPSEGAMANDESAEVMGDGESAHDSPREEAL). The segment covering 930 to 951 (AAATGATSLVAAPHSSSSSPSK) has biased composition (low complexity). Basic and acidic residues-rich tracts occupy residues 952–973 (DSSRGETEERKDSDDERSDRSR) and 995–1006 (EKQEKDKDDLGP). Serine 964 bears the Phosphoserine mark. The segment covering 1010–1022 (STLTDEPSPRLSA) has biased composition (polar residues). Serine 1017 and serine 1044 each carry phosphoserine. A compositionally biased stretch (basic and acidic residues) spans 1061 to 1071 (ESAHDSPREEA). 2 positions are modified to phosphoserine: serine 1076 and serine 1083. The 141-residue stretch at 1318 to 1458 (ILRDQVLHEH…EFIKTIDDRK (141 aa)) folds into the VPS9 domain.

This sequence belongs to the GAPVD1 family. Interacts with RAB5A. Interacts with TRIP10/CIP4. Present in adipocytes and fibroblasts (at protein level). Ubiquitously expressed.

The protein resides in the membrane. It localises to the endosome. In terms of biological role, acts both as a GTPase-activating protein (GAP) and a guanine nucleotide exchange factor (GEF), and participates in various processes such as endocytosis, insulin receptor internalization or LC2A4/GLUT4 trafficking. Acts as a GEF for the Ras-related protein RAB31 by exchanging bound GDP for free GTP, leading to regulate LC2A4/GLUT4 trafficking. In the absence of insulin, it maintains RAB31 in an active state and promotes a futile cycle between LC2A4/GLUT4 storage vesicles and early endosomes, retaining LC2A4/GLUT4 inside the cells. Upon insulin stimulation, it is translocated to the plasma membrane, releasing LC2A4/GLUT4 from intracellular storage vesicles. Also involved in EGFR trafficking and degradation, possibly by promoting EGFR ubiquitination and subsequent degradation by the proteasome. Has GEF activity for Rab5 and GAP activity for Ras. This Mus musculus (Mouse) protein is GTPase-activating protein and VPS9 domain-containing protein 1 (Gapvd1).